Reading from the N-terminus, the 113-residue chain is MNTVRVTFLLVFVLAVSLGQADKDENRMEMQKKTEQGKSYLDFAENLLLQKLEELEAKLLEEDSEESRNSRQKRCIGEGVPCDENDPRCCSGLVCLKPTLHGIWYKSYYCYKK.

An N-terminal signal peptide occupies residues 1-21; the sequence is MNTVRVTFLLVFVLAVSLGQA. A propeptide spanning residues 22 to 74 is cleaved from the precursor; it reads DKDENRMEMQKKTEQGKSYLDFAENLLLQKLEELEAKLLEEDSEESRNSRQKR. Cystine bridges form between cysteine 75–cysteine 90, cysteine 82–cysteine 95, and cysteine 89–cysteine 110.

It belongs to the neurotoxin 14 (magi-1) family. 01 (HNTX-16) subfamily. As to expression, expressed by the venom gland.

The protein localises to the secreted. In terms of biological role, probable ion channel inhibitor. The protein is U11-theraphotoxin-Hhn1a of Cyriopagopus hainanus (Chinese bird spider).